A 131-amino-acid chain; its full sequence is Aspartate 1-decarboxylase (131 aa).

Serine 25 functions as the Schiff-base intermediate with substrate; via pyruvic acid in the catalytic mechanism. Serine 25 carries the post-translational modification Pyruvic acid (Ser). Residue threonine 57 coordinates substrate. Residue tyrosine 58 is the Proton donor of the active site. Residue 73-75 (GAA) coordinates substrate.

It belongs to the PanD family. In terms of assembly, heterooctamer of four alpha and four beta subunits. Pyruvate serves as cofactor. In terms of processing, is synthesized initially as an inactive proenzyme, which is activated by self-cleavage at a specific serine bond to produce a beta-subunit with a hydroxyl group at its C-terminus and an alpha-subunit with a pyruvoyl group at its N-terminus.

It is found in the cytoplasm. The enzyme catalyses L-aspartate + H(+) = beta-alanine + CO2. The protein operates within cofactor biosynthesis; (R)-pantothenate biosynthesis; beta-alanine from L-aspartate: step 1/1. Catalyzes the pyruvoyl-dependent decarboxylation of aspartate to produce beta-alanine. The chain is Aspartate 1-decarboxylase from Acaryochloris marina (strain MBIC 11017).